A 156-amino-acid polypeptide reads, in one-letter code: Cytochrome c-type biogenesis protein CcmE 1 (156 aa).

The Cytoplasmic portion of the chain corresponds to 1–8; it reads MNATRKQR. Residues 9-29 form a helical; Signal-anchor for type II membrane protein membrane-spanning segment; that stretch reads LWLVIGVLAAAALAVTLIVFA. Over 30–156 the chain is Periplasmic; the sequence is LQRNMSYLFT…ATVAPLTAPR (127 aa). 2 residues coordinate heme: H123 and Y127.

It belongs to the CcmE/CycJ family.

The protein resides in the cell inner membrane. Functionally, heme chaperone required for the biogenesis of c-type cytochromes. Transiently binds heme delivered by CcmC and transfers the heme to apo-cytochromes in a process facilitated by CcmF and CcmH. This chain is Cytochrome c-type biogenesis protein CcmE 1, found in Xanthomonas axonopodis pv. citri (strain 306).